Reading from the N-terminus, the 432-residue chain is Monoacylglycerol lipase ABHD2 (432 aa).

The Cytoplasmic portion of the chain corresponds to 1–14; the sequence is MNTHESEVYTVAPE. The helical; Signal-anchor for type II membrane protein transmembrane segment at 15–35 threads the bilayer; the sequence is MPAMFDGMKLAAVATVLYVIV. Residues 36–432 are Extracellular-facing; sequence RCLNLKSPTA…NQTTCQENTS (397 aa). Positions 132–383 constitute an AB hydrolase-1 domain; that stretch reads TMVICPGIGN…HGGHLGFFEG (252 aa). An N-linked (GlcNAc...) asparagine glycan is attached at Asn-141. Residue Ser-212 is the Nucleophile of the active site. Asn-225 carries an N-linked (GlcNAc...) asparagine glycan. Catalysis depends on charge relay system residues Asp-346 and His-377. The segment at 413 to 432 is disordered; the sequence is PPCQSKDAQSNQTTCQENTS. A compositionally biased stretch (polar residues) spans 418-432; it reads KDAQSNQTTCQENTS. An N-linked (GlcNAc...) asparagine glycan is attached at Asn-423.

Belongs to the AB hydrolase superfamily. AB hydrolase 4 family.

The protein localises to the cell membrane. It catalyses the reaction Hydrolyzes glycerol monoesters of long-chain fatty acids.. The catalysed reaction is an acetyl ester + H2O = an aliphatic alcohol + acetate + H(+). The enzyme catalyses a triacylglycerol + H2O = a diacylglycerol + a fatty acid + H(+). It carries out the reaction 2-(5Z,8Z,11Z,14Z-eicosatetraenoyl)-glycerol + H2O = glycerol + (5Z,8Z,11Z,14Z)-eicosatetraenoate + H(+). It catalyses the reaction a butanoate ester + H2O = an aliphatic alcohol + butanoate + H(+). The catalysed reaction is hexadecanoate ester + H2O = an aliphatic alcohol + hexadecanoate + H(+). With respect to regulation, acylglycerol lipase activity is activated upon binding to progesterone. In terms of biological role, progesterone-dependent acylglycerol lipase that catalyzes hydrolysis of endocannabinoid arachidonoylglycerol (AG) from cell membrane. Acts as a progesterone receptor: progesterone-binding activates the acylglycerol lipase activity, mediating degradation of 1-arachidonoylglycerol (1AG) and 2-arachidonoylglycerol (2AG) to glycerol and arachidonic acid (AA). Also displays an ester hydrolase activity against acetyl ester, butanoate ester and hexadecanoate ester. Plays a key role in sperm capacitation in response to progesterone by mediating degradation of 2AG, an inhibitor of the sperm calcium channel CatSper, leading to calcium influx via CatSper and sperm activation. May also play a role in smooth muscle cells migration. The polypeptide is Monoacylglycerol lipase ABHD2 (abhd2a) (Danio rerio (Zebrafish)).